Here is a 183-residue protein sequence, read N- to C-terminus: ATP synthase subunit b, chloroplastic (183 aa).

A helical membrane pass occupies residues 25 to 45; the sequence is DILATNLINLTVVVGVLIFFG.

The protein belongs to the ATPase B chain family. In terms of assembly, F-type ATPases have 2 components, F(1) - the catalytic core - and F(0) - the membrane proton channel. F(1) has five subunits: alpha(3), beta(3), gamma(1), delta(1), epsilon(1). F(0) has four main subunits: a(1), b(1), b'(1) and c(10-14). The alpha and beta chains form an alternating ring which encloses part of the gamma chain. F(1) is attached to F(0) by a central stalk formed by the gamma and epsilon chains, while a peripheral stalk is formed by the delta, b and b' chains.

It is found in the plastid. The protein localises to the chloroplast thylakoid membrane. In terms of biological role, f(1)F(0) ATP synthase produces ATP from ADP in the presence of a proton or sodium gradient. F-type ATPases consist of two structural domains, F(1) containing the extramembraneous catalytic core and F(0) containing the membrane proton channel, linked together by a central stalk and a peripheral stalk. During catalysis, ATP synthesis in the catalytic domain of F(1) is coupled via a rotary mechanism of the central stalk subunits to proton translocation. Component of the F(0) channel, it forms part of the peripheral stalk, linking F(1) to F(0). This is ATP synthase subunit b, chloroplastic from Sorghum bicolor (Sorghum).